A 132-amino-acid polypeptide reads, in one-letter code: DNA-entry nuclease inhibitor (132 aa).

This protein is a subunit of a 75 kDa protein complex, which governs binding and entry of donor DNA. The complex is a tetramer of two subunits of the DNA-entry nuclease and two subunits of a competence-specific protein. Only the complex is able to bind ds- and ss-DNA.

It is found in the cell membrane. Functionally, plays a role in the competence of cells to be transformed. It inhibits the activity of the DNA-entry nuclease. In Bacillus subtilis (strain 168), this protein is DNA-entry nuclease inhibitor (nin).